The following is a 2190-amino-acid chain: Non-reducing polyketide synthase mapC' (2190 aa).

The N-terminal acylcarrier protein transacylase domain (SAT) stretch occupies residues 14-268; sequence VLFGPQCPDI…HHEAHREGIQ (255 aa). The Ketosynthase family 3 (KS3) domain occupies 401–817; the sequence is ASPIAITGMA…GSNAALIVKE (417 aa). Catalysis depends on for beta-ketoacyl synthase activity residues C566, H701, and H740. The segment at 893 to 1190 is malonyl-CoA:ACP transacylase (MAT) domain; it reads CFGGQNGLTA…NVTSALWAQG (298 aa). S979 acts as the For acyl/malonyl transferase activity in catalysis. The segment at 1243-1375 is N-terminal hotdog fold; it reads GQEAGLLCQL…GTVCLHQERS (133 aa). In terms of domain architecture, PKS/mFAS DH spans 1243–1552; sequence GQEAGLLCQL…FTSVSIRSLT (310 aa). A product template (PT) domain region spans residues 1251–1556; the sequence is QLSESPDERL…SIRSLTRALA (306 aa). Catalysis depends on H1277, which acts as the Proton acceptor; for dehydratase activity. The interval 1401–1552 is C-terminal hotdog fold; it reads ASNGLKGSTV…FTSVSIRSLT (152 aa). D1458 functions as the Proton donor; for dehydratase activity in the catalytic mechanism. Residues 1597–1671 form the Carrier domain; sequence ANDLATVQEM…GLVEHIFPGH (75 aa). S1631 is modified (O-(pantetheine 4'-phosphoryl)serine). The methyltransferase (CMeT) domain stretch occupies residues 1840-2187; it reads ATMSPSKPIK…AEGYEFLRTH (348 aa). Catalysis depends on for thioesterase activity residues S1969, D2127, and H2159.

It localises to the cytoplasm. The protein resides in the cytosol. The catalysed reaction is 3 malonyl-CoA + acetyl-CoA + S-adenosyl-L-methionine + H(+) = 5-methylorsellinate + S-adenosyl-L-homocysteine + 3 CO2 + 4 CoA. The protein operates within secondary metabolite biosynthesis; terpenoid biosynthesis. Its function is as follows. Non-reducing polyketide synthase; part of the gene cluster that mediates the biosynthesis of mycophenolic acid (MPA), the first isolated antibiotic natural product in the world obtained from a culture of Penicillium brevicompactum in 1893. MpaC' catalyzes the synthesis of 5-methylorsellinic acid (5MOA) via the condensation of 1 acetyl-CoA starter unit with 3 malonyl-CoA units and one methylation step. The first step of the pathway is the synthesis of 5-methylorsellinic acid (5MOA) by the cytosolic polyketide synthase mpaC. 5MOA is then converted to the phthalide compound 5,7-dihydroxy-4,6-dimethylphthalide (DHMP) by the endoplasmic reticulum-bound cytochrome P450 monooxygenase mpaDE. MpaDE first catalyzes hydroxylation of 5-MOA to 4,6-dihydroxy-2-(hydroxymethyl)-3-methylbenzoic acid (DHMB). MpaDE then acts as a lactone synthase that catalyzes the ring closure to convert DHMB into DHMP. The next step is the prenylation of DHMP by the Golgi apparatus-associated prenyltransferase mpaA to yield farnesyl-DHMP (FDHMP). The ER-bound oxygenase mpaB then mediates the oxidative cleavage the C19-C20 double bond in FDHMP to yield FDHMP-3C via a mycophenolic aldehyde intermediate. The O-methyltransferase mpaG catalyzes the methylation of FDHMP-3C to yield MFDHMP-3C. After the cytosolic methylation of FDHMP-3C, MFDHMP-3C enters into peroxisomes probably via free diffusion due to its low molecular weight. Upon a peroxisomal CoA ligation reaction, catalyzed by a beta-oxidation component enzyme acyl-CoA ligase ACL891, MFDHMP-3C-CoA would then be restricted to peroxisomes for the following beta-oxidation pathway steps. The peroxisomal beta-oxidation machinery than converts MFDHMP-3C-CoA into MPA_CoA, via a beta-oxidation chain-shortening process. Finally mpaH acts as a peroxisomal acyl-CoA hydrolase with high substrate specificity toward MPA-CoA to release the final product MPA. The protein is Non-reducing polyketide synthase mapC' of Penicillium brevicompactum.